The sequence spans 102 residues: Small ribosomal subunit protein eS24 (102 aa).

It belongs to the eukaryotic ribosomal protein eS24 family.

This is Small ribosomal subunit protein eS24 from Methanococcus maripaludis (strain C7 / ATCC BAA-1331).